Consider the following 184-residue polypeptide: MKQLLEFIPLILFFAVYKLVGIREAAITLIIATLIQLLILKIKYGKVEKQQLFMGIAVVFFGTLTAYFNQLEYLKWKVTIVYAIFALVLLVSQYGFNKNLIKLMLGKEDALELPEQVWNRLNLGWALFFLLCMLINLYISQYLSDDLWVDFKTFGILGMTLIATIITGIYIYRYLPQTKSNNKE.

5 helical membrane passes run 19–39 (LVGI…QLLI), 52–72 (LFMG…NQLE), 76–96 (WKVT…QYGF), 123–143 (LGWA…SQYL), and 151–171 (FKTF…GIYI).

The protein belongs to the YciB family.

It is found in the cell inner membrane. Functionally, plays a role in cell envelope biogenesis, maintenance of cell envelope integrity and membrane homeostasis. This Pasteurella multocida (strain Pm70) protein is Inner membrane-spanning protein YciB.